Reading from the N-terminus, the 908-residue chain is UPF0182 protein Csac_0864 (908 aa).

7 consecutive transmembrane segments (helical) span residues 22–42 (FVIS…DLFL), 62–82 (FYVK…VFFV), 98–118 (ISLL…ALIA), 166–186 (FLFY…IVLY), 208–228 (HIFF…KYEM), 253–273 (YFRL…YFFI), and 286–306 (SYIG…YFVV).

This sequence belongs to the UPF0182 family.

Its subcellular location is the cell membrane. In Caldicellulosiruptor saccharolyticus (strain ATCC 43494 / DSM 8903 / Tp8T 6331), this protein is UPF0182 protein Csac_0864.